The primary structure comprises 1007 residues: Serine/threonine-protein kinase atg1 (1007 aa).

Residues 30–336 form the Protein kinase domain; sequence YTRLSEIGRG…FDVYFAHKVL (307 aa). Residues 36–44 and lysine 59 contribute to the ATP site; that span reads IGRGSFAVV. Aspartate 174 functions as the Proton acceptor in the catalytic mechanism. Disordered stretches follow at residues 343–489, 524–586, 795–817, and 878–900; these read LVAD…KEHA, GGQA…PTSA, RLPS…GSGT, and SRPG…DGGQ. Basic and acidic residues predominate over residues 373 to 387; sequence MKRENALSGGVRDEP. Over residues 396–410 the composition is skewed to polar residues; it reads AMTQSPRPETPSTPM. The segment covering 477–489 has biased composition (basic and acidic residues); it reads KPVEKAKDEKEHA. The segment covering 534–555 has biased composition (low complexity); sequence SGAAPGTPPAGGSSPHASPSKA. The span at 563-579 shows a compositional bias: basic and acidic residues; the sequence is SRADSAHVRQNSYDRRY. The span at 805–817 shows a compositional bias: low complexity; that stretch reads SNLSVGSSLGSGT. Positions 887 to 896 are enriched in basic and acidic residues; it reads DRADARRDNE.

This sequence belongs to the protein kinase superfamily. Ser/Thr protein kinase family. APG1/unc-51/ULK1 subfamily. As to quaternary structure, homodimer. Forms a ternary complex with ATG13 and ATG17.

Its subcellular location is the cytoplasm. The protein localises to the preautophagosomal structure membrane. The enzyme catalyses L-seryl-[protein] + ATP = O-phospho-L-seryl-[protein] + ADP + H(+). The catalysed reaction is L-threonyl-[protein] + ATP = O-phospho-L-threonyl-[protein] + ADP + H(+). Serine/threonine protein kinase involved in the cytoplasm to vacuole transport (Cvt) and found to be essential in autophagy, where it is required for the formation of autophagosomes. Involved in the clearance of protein aggregates which cannot be efficiently cleared by the proteasome. Required for selective autophagic degradation of the nucleus (nucleophagy) as well as for mitophagy which contributes to regulate mitochondrial quantity and quality by eliminating the mitochondria to a basal level to fulfill cellular energy requirements and preventing excess ROS production. Also involved in endoplasmic reticulum-specific autophagic process, in selective removal of ER-associated degradation (ERAD) substrates. Plays a key role in ATG9 and ATG23 cycling through the pre-autophagosomal structure and is necessary to promote ATG18 binding to ATG9 through phosphorylation of ATG9. Catalyzes phosphorylation of ATG4, decreasing the interaction between ATG4 and ATG8 and impairing deconjugation of PE-conjugated forms of ATG8. The chain is Serine/threonine-protein kinase atg1 from Aspergillus niger (strain ATCC MYA-4892 / CBS 513.88 / FGSC A1513).